We begin with the raw amino-acid sequence, 212 residues long: Acyl-homoserine-lactone synthase (212 aa).

The protein belongs to the autoinducer synthase family.

The enzyme catalyses a fatty acyl-[ACP] + S-adenosyl-L-methionine = an N-acyl-L-homoserine lactone + S-methyl-5'-thioadenosine + holo-[ACP] + H(+). In terms of biological role, required for the synthesis of OHHL (N-(3-oxohexanoyl)-L-homoserine lactone), an autoinducer molecule which binds to the EchR transcriptional regulator. This chain is Acyl-homoserine-lactone synthase (echI), found in Dickeya chrysanthemi (Pectobacterium chrysanthemi).